We begin with the raw amino-acid sequence, 97 residues long: Large ribosomal subunit protein eL21 (97 aa).

Positions 1 to 12 (MPSSNGPRQATR) are enriched in polar residues. Residues 1–35 (MPSSNGPRQATRNKLKNDARERGTSPPQRSIEEYD) form a disordered region.

It belongs to the eukaryotic ribosomal protein eL21 family.

This chain is Large ribosomal subunit protein eL21, found in Natronomonas pharaonis (strain ATCC 35678 / DSM 2160 / CIP 103997 / JCM 8858 / NBRC 14720 / NCIMB 2260 / Gabara) (Halobacterium pharaonis).